A 431-amino-acid polypeptide reads, in one-letter code: MITAPIRTTARDTQIFDLISKEAHRQEEGIELIASENFTSKQVMEAMGSVLTNKYAEGLPGKRYYGGCQVVDQVEQIAIDRLKKLFGAEWANVQPHSGAQANAAIMIACLNPGDSILGFDLSHGGHLSHGSPVNMSGKYFKAHFYGVEKESGLINMDIVEATALKVKPKMIICGASAYSRDWDYARFRKIADSVGAILLADISHPAGLIAKGLLNDPIPHCHIVSTTTHKTLRGPRGGVIMMGKDFENPFGLKTPKGETRMMSNVLDMGVFPGTQGGPLEHVIAAKAVAFQEALSTDYLQYAKQIQKNAQIMAEAFLKKGYDIISGGTDNHLMLIDLRSKNLTGKEAENALIRADITINKNMVPFDDKSPFVTSGMRVGTAAITSRGMVGDDMIRIVEMIDTVLMNQTKDSVIETVRKDVNNWMAQYPLYI.

Residues leucine 121 and glycine 125–leucine 127 each bind (6S)-5,6,7,8-tetrahydrofolate. At lysine 230 the chain carries N6-(pyridoxal phosphate)lysine. Serine 369–phenylalanine 371 is a binding site for (6S)-5,6,7,8-tetrahydrofolate.

Belongs to the SHMT family. As to quaternary structure, homodimer. The cofactor is pyridoxal 5'-phosphate.

It is found in the cytoplasm. The catalysed reaction is (6R)-5,10-methylene-5,6,7,8-tetrahydrofolate + glycine + H2O = (6S)-5,6,7,8-tetrahydrofolate + L-serine. It functions in the pathway one-carbon metabolism; tetrahydrofolate interconversion. It participates in amino-acid biosynthesis; glycine biosynthesis; glycine from L-serine: step 1/1. In terms of biological role, catalyzes the reversible interconversion of serine and glycine with tetrahydrofolate (THF) serving as the one-carbon carrier. This reaction serves as the major source of one-carbon groups required for the biosynthesis of purines, thymidylate, methionine, and other important biomolecules. Also exhibits THF-independent aldolase activity toward beta-hydroxyamino acids, producing glycine and aldehydes, via a retro-aldol mechanism. This Cytophaga hutchinsonii (strain ATCC 33406 / DSM 1761 / CIP 103989 / NBRC 15051 / NCIMB 9469 / D465) protein is Serine hydroxymethyltransferase.